We begin with the raw amino-acid sequence, 166 residues long: MAPKKAKKRIEGGSSNVFSMFEQTQIQEFKEAFTIMDQNRDGFIDKNDLRDTFAALGRVNVKNEEIDEMIKEAPGPINFTVFLTMFGEKLKGADPEETILNAFKVFDPEGKGSLKADYVREMLTTQAERFSKEEIDQMFAAFPPDVTGNLDYKNLVHIITHGEEKD.

A N,N,N-trimethylalanine modification is found at Ala2. 2 positions are modified to phosphoserine; by MLCK: Ser14 and Ser15. The residue at position 19 (Ser19) is a Phosphoserine. 3 EF-hand domains span residues 24-59 (TQIQEFKEAFTIMDQNRDGFIDKNDLRDTFAALGRV), 94-129 (DPEETILNAFKVFDPEGKGSLKADYVREMLTTQAER), and 130-165 (FSKEEIDQMFAAFPPDVTGNLDYKNLVHIITHGEEK). Asp37, Asn39, Asp41, and Asp48 together coordinate Ca(2+). Thr52 is subject to Phosphothreonine.

Myosin is a hexamer of 2 heavy chains and 4 light chains. Interacts with MYOC. In terms of processing, N-terminus is methylated by METTL11A/NTM1. Phosphorylated by MYLK3 and MYLK2; promotes cardiac muscle contraction and function. Dephosphorylated by PPP1CB complexed to PPP1R12B. The phosphorylated form in adult is expressed as gradients across the heart from endocardium (low phosphorylation) to epicardium (high phosphorylation); regulates cardiac torsion and workload distribution. Abundantly expressed in both cardiac and slow skeletal muscle. In the adult heart, the phosphorylated form is highly expressed in epicardium and weakly in endocardium.

It localises to the cytoplasm. Its subcellular location is the myofibril. It is found in the sarcomere. The protein resides in the a band. Its function is as follows. Contractile protein that plays a role in heart development and function. Following phosphorylation, plays a role in cross-bridge cycling kinetics and cardiac muscle contraction by increasing myosin lever arm stiffness and promoting myosin head diffusion; as a consequence of the increase in maximum contraction force and calcium sensitivity of contraction force. These events altogether slow down myosin kinetics and prolong duty cycle resulting in accumulated myosins being cooperatively recruited to actin binding sites to sustain thin filament activation as a means to fine-tune myofilament calcium sensitivity to force. During cardiogenesis plays an early role in cardiac contractility by promoting cardiac myofibril assembly. The polypeptide is Myosin regulatory light chain 2, ventricular/cardiac muscle isoform (Mus musculus (Mouse)).